A 395-amino-acid chain; its full sequence is Enolase (395 aa).

Substrate is bound by residues His136 and Glu145. The active-site Proton donor is the Glu188. 3 residues coordinate Mg(2+): Asp223, Glu271, and Asp296. Residues Glu271 and Asp296 each contribute to the substrate site. Lys321 acts as the Proton acceptor in catalysis. Residues 348–351 (SHRS) and Lys372 contribute to the substrate site.

Belongs to the enolase family. Homodimer. Mg(2+) is required as a cofactor.

Its subcellular location is the cytoplasm. It carries out the reaction (2R)-2-phosphoglycerate = phosphoenolpyruvate + H2O. It participates in carbohydrate degradation; glycolysis; pyruvate from D-glyceraldehyde 3-phosphate: step 4/5. This is Enolase from Alligator mississippiensis (American alligator).